The sequence spans 338 residues: tRNA N6-adenosine threonylcarbamoyltransferase (338 aa).

Residues H111 and H115 each contribute to the Fe cation site. Substrate contacts are provided by residues L134–G138, D167, G180, and N272. D300 is a Fe cation binding site.

This sequence belongs to the KAE1 / TsaD family. Fe(2+) serves as cofactor.

It is found in the cytoplasm. The enzyme catalyses L-threonylcarbamoyladenylate + adenosine(37) in tRNA = N(6)-L-threonylcarbamoyladenosine(37) in tRNA + AMP + H(+). In terms of biological role, required for the formation of a threonylcarbamoyl group on adenosine at position 37 (t(6)A37) in tRNAs that read codons beginning with adenine. Is involved in the transfer of the threonylcarbamoyl moiety of threonylcarbamoyl-AMP (TC-AMP) to the N6 group of A37, together with TsaE and TsaB. TsaD likely plays a direct catalytic role in this reaction. In Shewanella putrefaciens (strain CN-32 / ATCC BAA-453), this protein is tRNA N6-adenosine threonylcarbamoyltransferase.